The primary structure comprises 370 residues: Queuine tRNA-ribosyltransferase (370 aa).

Aspartate 89 acts as the Proton acceptor in catalysis. Substrate is bound by residues 89–93 (DSGGF), aspartate 143, glutamine 187, and glycine 214. The RNA binding stretch occupies residues 245 to 251 (GVGKPEN). Aspartate 264 (nucleophile) is an active-site residue. The tract at residues 269–273 (TRNAR) is RNA binding; important for wobble base 34 recognition. Zn(2+) is bound by residues cysteine 302, cysteine 304, cysteine 307, and histidine 333.

It belongs to the queuine tRNA-ribosyltransferase family. In terms of assembly, homodimer. Within each dimer, one monomer is responsible for RNA recognition and catalysis, while the other monomer binds to the replacement base PreQ1. It depends on Zn(2+) as a cofactor.

It catalyses the reaction 7-aminomethyl-7-carbaguanine + guanosine(34) in tRNA = 7-aminomethyl-7-carbaguanosine(34) in tRNA + guanine. The protein operates within tRNA modification; tRNA-queuosine biosynthesis. Catalyzes the base-exchange of a guanine (G) residue with the queuine precursor 7-aminomethyl-7-deazaguanine (PreQ1) at position 34 (anticodon wobble position) in tRNAs with GU(N) anticodons (tRNA-Asp, -Asn, -His and -Tyr). Catalysis occurs through a double-displacement mechanism. The nucleophile active site attacks the C1' of nucleotide 34 to detach the guanine base from the RNA, forming a covalent enzyme-RNA intermediate. The proton acceptor active site deprotonates the incoming PreQ1, allowing a nucleophilic attack on the C1' of the ribose to form the product. After dissociation, two additional enzymatic reactions on the tRNA convert PreQ1 to queuine (Q), resulting in the hypermodified nucleoside queuosine (7-(((4,5-cis-dihydroxy-2-cyclopenten-1-yl)amino)methyl)-7-deazaguanosine). The sequence is that of Queuine tRNA-ribosyltransferase from Hamiltonella defensa subsp. Acyrthosiphon pisum (strain 5AT).